We begin with the raw amino-acid sequence, 503 residues long: Probable cytosol aminopeptidase (503 aa).

Positions 270 and 275 each coordinate Mn(2+). The active site involves lysine 282. Residues aspartate 293, aspartate 352, and glutamate 354 each coordinate Mn(2+). Arginine 356 is an active-site residue.

It belongs to the peptidase M17 family. It depends on Mn(2+) as a cofactor.

It localises to the cytoplasm. The catalysed reaction is Release of an N-terminal amino acid, Xaa-|-Yaa-, in which Xaa is preferably Leu, but may be other amino acids including Pro although not Arg or Lys, and Yaa may be Pro. Amino acid amides and methyl esters are also readily hydrolyzed, but rates on arylamides are exceedingly low.. It catalyses the reaction Release of an N-terminal amino acid, preferentially leucine, but not glutamic or aspartic acids.. Its function is as follows. Presumably involved in the processing and regular turnover of intracellular proteins. Catalyzes the removal of unsubstituted N-terminal amino acids from various peptides. The protein is Probable cytosol aminopeptidase of Citrobacter koseri (strain ATCC BAA-895 / CDC 4225-83 / SGSC4696).